Here is a 468-residue protein sequence, read N- to C-terminus: MKTHFNFDTVVIGSGPGGEGAAMGLAKKGQSVAVVERYKNVGGGCTHSGTIPSKALRHVISRIIEFNQNPLYSEHLQSIHPSFYHILQHANHVIRKQVSMRFDFYQRNHCHLFFGHARFIDPYKLEVIRPDGTLNTLSADHIVIATGSRPYHPESIDFTHPRIYDSDSILELKEEQQPKHIIIYGAGVIGCEYASIFRGLGVKVDLINTRNHLLAFLDQEISDALSYHFWNNGVVIRHNEEFDLIEGLDQGVVVHLKSGKKVKADCLFYANGRTGNTKELLLENIGLRTDERRFLQVSNLYQTALSHIYAVGDVIGYPSLASAAYDQGRIASQAITQGINSVRLIENIPTGIYTIPEISSVGKTEQELTDLKVPYEVGRAQFKHLARAQIAGMEAGSLKILFHRESKEILGIHCFGERAAEIIHIGQAIMEQKNGGNTIDYFVNTTFNYPTMAEAYRVAALNGLNRLF.

Residue 36-45 (ERYKNVGGGC) coordinates FAD.

This sequence belongs to the class-I pyridine nucleotide-disulfide oxidoreductase family. FAD serves as cofactor.

The protein localises to the cytoplasm. It carries out the reaction NAD(+) + NADPH = NADH + NADP(+). Its function is as follows. Conversion of NADPH, generated by peripheral catabolic pathways, to NADH, which can enter the respiratory chain for energy generation. This is Soluble pyridine nucleotide transhydrogenase from Hamiltonella defensa subsp. Acyrthosiphon pisum (strain 5AT).